Reading from the N-terminus, the 511-residue chain is UPF0288 protein MK0796 (511 aa).

Belongs to the UPF0288 family.

The polypeptide is UPF0288 protein MK0796 (Methanopyrus kandleri (strain AV19 / DSM 6324 / JCM 9639 / NBRC 100938)).